Reading from the N-terminus, the 660-residue chain is DNA topoisomerase I, plasmid (660 aa).

Residues Met-1–Ala-110 form the Toprim domain. Mg(2+) contacts are provided by Glu-7 and Asp-79. Residues Asp-124–Leu-550 form the Topo IA-type catalytic domain. Residues Ser-158 to Gln-163 are interaction with DNA. Residue Tyr-287 is the O-(5'-phospho-DNA)-tyrosine intermediate of the active site. 2 C4-type zinc fingers span residues Cys-563 to Cys-589 and Cys-613 to Cys-643.

The protein belongs to the type IA topoisomerase family. As to quaternary structure, monomer. The cofactor is Mg(2+).

The enzyme catalyses ATP-independent breakage of single-stranded DNA, followed by passage and rejoining.. Releases the supercoiling and torsional tension of DNA, which is introduced during the DNA replication and transcription, by transiently cleaving and rejoining one strand of the DNA duplex. Introduces a single-strand break via transesterification at a target site in duplex DNA. The scissile phosphodiester is attacked by the catalytic tyrosine of the enzyme, resulting in the formation of a DNA-(5'-phosphotyrosyl)-enzyme intermediate and the expulsion of a 3'-OH DNA strand. The free DNA strand then undergoes passage around the unbroken strand, thus removing DNA supercoils. Finally, in the religation step, the DNA 3'-OH attacks the covalent intermediate to expel the active-site tyrosine and restore the DNA phosphodiester backbone. This chain is DNA topoisomerase I, plasmid, found in Xylella fastidiosa (strain 9a5c).